The sequence spans 248 residues: ATP synthase subunit a, chloroplastic (248 aa).

A run of 5 helical transmembrane segments spans residues 37–57, 96–116, 135–155, 200–220, and 221–241; these read AQVLITSWVVIAILLGLSIVA, VPFIGTMFLFIFVSNWSGALF, INTTVALALLTSVAYFYAGLH, LVVAVLISLVPLVVPIPMMFL, and GLFTSAIQALIFATLAAAYIG.

Belongs to the ATPase A chain family. In terms of assembly, F-type ATPases have 2 components, CF(1) - the catalytic core - and CF(0) - the membrane proton channel. CF(1) has five subunits: alpha(3), beta(3), gamma(1), delta(1), epsilon(1). CF(0) has four main subunits: a, b, b' and c.

The protein resides in the plastid. It localises to the chloroplast thylakoid membrane. Key component of the proton channel; it plays a direct role in the translocation of protons across the membrane. This is ATP synthase subunit a, chloroplastic from Angiopteris evecta (Mule's foot fern).